A 72-amino-acid polypeptide reads, in one-letter code: Translation initiation factor IF-1 (72 aa).

In terms of domain architecture, S1-like spans 1-72 (MAKEDNIEMQ…SKGRIVFRSR (72 aa)).

This sequence belongs to the IF-1 family. As to quaternary structure, component of the 30S ribosomal translation pre-initiation complex which assembles on the 30S ribosome in the order IF-2 and IF-3, IF-1 and N-formylmethionyl-tRNA(fMet); mRNA recruitment can occur at any time during PIC assembly.

The protein localises to the cytoplasm. Functionally, one of the essential components for the initiation of protein synthesis. Stabilizes the binding of IF-2 and IF-3 on the 30S subunit to which N-formylmethionyl-tRNA(fMet) subsequently binds. Helps modulate mRNA selection, yielding the 30S pre-initiation complex (PIC). Upon addition of the 50S ribosomal subunit IF-1, IF-2 and IF-3 are released leaving the mature 70S translation initiation complex. In Shewanella loihica (strain ATCC BAA-1088 / PV-4), this protein is Translation initiation factor IF-1.